The following is a 338-amino-acid chain: Secretion system apparatus protein SsaL (338 aa).

The chain is Secretion system apparatus protein SsaL (ssaL) from Salmonella typhimurium (strain LT2 / SGSC1412 / ATCC 700720).